The following is a 292-amino-acid chain: Phosphatidylglycerol--prolipoprotein diacylglyceryl transferase (292 aa).

4 helical membrane-spanning segments follow: residues 18–38 (LFGA…GLLI), 67–87 (LLTW…VLFY), 105–125 (GGMS…AFCL), and 129–149 (ISIL…LFLG). Arg-150 contributes to the a 1,2-diacyl-sn-glycero-3-phospho-(1'-sn-glycerol) binding site. Helical transmembrane passes span 193–213 (QLYE…ILIW), 222–242 (GAVT…VEFV), and 266–286 (GLTM…YFML).

It belongs to the Lgt family.

The protein resides in the cell inner membrane. It catalyses the reaction L-cysteinyl-[prolipoprotein] + a 1,2-diacyl-sn-glycero-3-phospho-(1'-sn-glycerol) = an S-1,2-diacyl-sn-glyceryl-L-cysteinyl-[prolipoprotein] + sn-glycerol 1-phosphate + H(+). The protein operates within protein modification; lipoprotein biosynthesis (diacylglyceryl transfer). Catalyzes the transfer of the diacylglyceryl group from phosphatidylglycerol to the sulfhydryl group of the N-terminal cysteine of a prolipoprotein, the first step in the formation of mature lipoproteins. The protein is Phosphatidylglycerol--prolipoprotein diacylglyceryl transferase of Cereibacter sphaeroides (strain ATCC 17025 / ATH 2.4.3) (Rhodobacter sphaeroides).